The sequence spans 273 residues: Dermonecrotic toxin LhSicTox-alphaIA2ai (273 aa).

The active site involves His-5. Residues Glu-25 and Asp-27 each contribute to the Mg(2+) site. The active-site Nucleophile is the His-41. Disulfide bonds link Cys-45/Cys-51 and Cys-47/Cys-190. Residue Asp-85 participates in Mg(2+) binding.

The protein belongs to the arthropod phospholipase D family. Class II subfamily. Requires Mg(2+) as cofactor. In terms of tissue distribution, expressed by the venom gland.

The protein localises to the secreted. The catalysed reaction is an N-(acyl)-sphingosylphosphocholine = an N-(acyl)-sphingosyl-1,3-cyclic phosphate + choline. It catalyses the reaction an N-(acyl)-sphingosylphosphoethanolamine = an N-(acyl)-sphingosyl-1,3-cyclic phosphate + ethanolamine. The enzyme catalyses a 1-acyl-sn-glycero-3-phosphocholine = a 1-acyl-sn-glycero-2,3-cyclic phosphate + choline. It carries out the reaction a 1-acyl-sn-glycero-3-phosphoethanolamine = a 1-acyl-sn-glycero-2,3-cyclic phosphate + ethanolamine. In terms of biological role, dermonecrotic toxins cleave the phosphodiester linkage between the phosphate and headgroup of certain phospholipids (sphingolipid and lysolipid substrates), forming an alcohol (often choline) and a cyclic phosphate. This toxin acts on sphingomyelin (SM). It may also act on ceramide phosphoethanolamine (CPE), lysophosphatidylcholine (LPC) and lysophosphatidylethanolamine (LPE), but not on lysophosphatidylserine (LPS), and lysophosphatidylglycerol (LPG). It acts by transphosphatidylation, releasing exclusively cyclic phosphate products as second products. Induces dermonecrosis, hemolysis, increased vascular permeability, edema, inflammatory response, and platelet aggregation. The sequence is that of Dermonecrotic toxin LhSicTox-alphaIA2ai from Loxosceles hirsuta (Recluse spider).